The following is a 376-amino-acid chain: Carboxylic ester hydrolase LipN (376 aa).

Residues Ser-216, Asp-316, and His-346 contribute to the active site.

The protein belongs to the 'GDXG' lipolytic enzyme family.

It is found in the cytoplasm. It carries out the reaction a carboxylic ester + H2O = an alcohol + a carboxylate + H(+). The catalysed reaction is an acetyl ester + H2O = an aliphatic alcohol + acetate + H(+). It catalyses the reaction a butanoate ester + H2O = an aliphatic alcohol + butanoate + H(+). The enzyme catalyses an octanoate ester + H2O = an aliphatic alcohol + octanoate + H(+). It carries out the reaction decanoate ester + H2O = decanoate + an aliphatic alcohol + H(+). The catalysed reaction is a dodecanoate ester + H2O = an aliphatic alcohol + dodecanoate + H(+). It catalyses the reaction 1,2,3-tributanoylglycerol + H2O = dibutanoylglycerol + butanoate + H(+). The enzyme catalyses 4-acetoxyphenol + H2O = hydroquinone + acetate + H(+). Its activity is regulated as follows. Completely inhibited by tetrahydrolipstatin (THL), RHC-80267 and N-bromosuccinimide. In terms of biological role, non specific carboxylic ester hydrolase. Hydrolyzes various pNP-esters, with a preference for short carbon chain substrates. Can also hydrolyze tributyrin to di- and monobutyrin and 4-hydroxyphenylacetate to hydroquinone. This chain is Carboxylic ester hydrolase LipN, found in Mycobacterium tuberculosis (strain ATCC 25618 / H37Rv).